The chain runs to 183 residues: uncharacterized protein (183 aa).

Helical transmembrane passes span 37-59 (LFGY…PRQF), 79-98 (AILL…VTSV), 110-132 (WRTF…VLVL), and 142-161 (AFYA…TYVF).

The protein localises to the cell membrane. This is an uncharacterized protein from Archaeoglobus fulgidus (strain ATCC 49558 / DSM 4304 / JCM 9628 / NBRC 100126 / VC-16).